The chain runs to 158 residues: Cyclic pyranopterin monophosphate synthase (158 aa).

Substrate contacts are provided by residues 75-77 and 111-112; these read LCH and ME. Residue aspartate 126 is part of the active site.

This sequence belongs to the MoaC family. In terms of assembly, homohexamer; trimer of dimers.

The catalysed reaction is (8S)-3',8-cyclo-7,8-dihydroguanosine 5'-triphosphate = cyclic pyranopterin phosphate + diphosphate. It participates in cofactor biosynthesis; molybdopterin biosynthesis. Functionally, catalyzes the conversion of (8S)-3',8-cyclo-7,8-dihydroguanosine 5'-triphosphate to cyclic pyranopterin monophosphate (cPMP). This Caulobacter vibrioides (strain ATCC 19089 / CIP 103742 / CB 15) (Caulobacter crescentus) protein is Cyclic pyranopterin monophosphate synthase.